Here is a 413-residue protein sequence, read N- to C-terminus: Gamma-DL-glutamyl hydrolase (413 aa).

The signal sequence occupies residues 1–32; it reads MNTLANWKKFLLVAVIICFLVPIMTKAEIAEA. 3 NlpC/P60 domains span residues 33–159, 163–287, and 291–413; these read DTSS…RRIA, ATAD…RRFD, and IPKE…IRVQ. C194 functions as the Nucleophile in the catalytic mechanism. Residue H247 is the Proton acceptor of the active site. Q259 is a catalytic residue.

It belongs to the peptidase C40 family.

It localises to the secreted. It is found in the cell wall. With respect to regulation, inhibited by pretreatment with 1 mM 4-(hydroxymercuri)benzoate, a sulfhydryl inhibitor. In terms of biological role, cleaves, in an endo-type manner, the gamma-glutamyl bond between D-glutamate and L-glutamate of poly-gamma-glutamate (PGA). In Bacillus subtilis (strain 168), this protein is Gamma-DL-glutamyl hydrolase (pgdS).